A 519-amino-acid chain; its full sequence is Cell division cycle protein 20 homolog B (519 aa).

Positions 79 to 98 (QSQTRALSSDSFGEEQSTTY) are enriched in polar residues. Positions 79 to 133 (QSQTRALSSDSFGEEQSTTYLPEASGSVLKTPPEKETLTLGSRKEQLKTPSKGIS) are disordered. Positions 110-125 (PPEKETLTLGSRKEQL) are enriched in basic and acidic residues. WD repeat units follow at residues 229 to 266 (RNDY…GIEN), 271 to 310 (LTCN…RLRN), 311 to 341 (MLGH…YHHD), 353 to 392 (RHKQ…SAQG), 399 to 441 (TQST…SIQT), 443 to 484 (STNS…RSGG), and 487 to 519 (GHRG…WNCY).

It belongs to the WD repeat CDC20/Fizzy family. As to expression, expressed in multiciliated cells (MCCs).

It localises to the cytoplasm. Protein regulator of centriole-deuterosome disengagement and subsequently participates in the ciliogenesis in multiciliated cells (MCCs). This chain is Cell division cycle protein 20 homolog B, found in Homo sapiens (Human).